A 305-amino-acid polypeptide reads, in one-letter code: MIRVLFMGTPAYAKTILEALWFSEEVEVVGVVSQPDKPVGRRQELTPPPVKESCLRLAPHTPLFQPENLKEERWAKEWRALEPDFIVVAAYGKILPKVILDIAPCINLHASILPLYRGASPIHESLRRGDAWSGVSAMRMEEGLDCGEVLGCSFVEIKEEWGVSRLFEELANRAAALTLKVLKRFSEIRPLPQVGADSSYCRKIRKEEGLVGFVNAKELYDQFRAYKVWPGIFLRSELKLKEITLLSETGEHHMGEILAINKEGVVVGCKEGSLRILMVQAPSKKEVDAVSYVNGKRLGVGDILF.

111-114 lines the (6S)-5,6,7,8-tetrahydrofolate pocket; it reads SILP.

Belongs to the Fmt family.

The catalysed reaction is L-methionyl-tRNA(fMet) + (6R)-10-formyltetrahydrofolate = N-formyl-L-methionyl-tRNA(fMet) + (6S)-5,6,7,8-tetrahydrofolate + H(+). Attaches a formyl group to the free amino group of methionyl-tRNA(fMet). The formyl group appears to play a dual role in the initiator identity of N-formylmethionyl-tRNA by promoting its recognition by IF2 and preventing the misappropriation of this tRNA by the elongation apparatus. The chain is Methionyl-tRNA formyltransferase from Wolinella succinogenes (strain ATCC 29543 / DSM 1740 / CCUG 13145 / JCM 31913 / LMG 7466 / NCTC 11488 / FDC 602W) (Vibrio succinogenes).